A 140-amino-acid chain; its full sequence is Pro-vaccinia growth factor (140 aa).

An N-terminal signal peptide occupies residues 1 to 18; that stretch reads MLINYLMLLFAAMIIRSF. Residues 19-100 are Extracellular-facing; the sequence is ADSGNAIETT…SEKPNTTTSY (82 aa). N-linked (GlcNAc...) asparagine; by host glycosylation is present at Asn34. Residues 41 to 81 form the EGF-like domain; sequence AIRLCGPEGDGYCLHGDCIHARDIDGMYCRCSHGYTGIRCQ. Disulfide bonds link Cys45-Cys58, Cys53-Cys69, and Cys71-Cys80. N-linked (GlcNAc...) asparagine; by host glycosylation is present at Asn95. Residues 101–121 form a helical membrane-spanning segment; sequence IPSPGIMLVLVGIIIITCCLL. At 122–140 the chain is on the cytoplasmic side; it reads SVYRFTRRTKLPLQDMVVP.

Belongs to the orthopoxvirus OPG019 family. Vaccinia growth factor interacts with host EGFR and promotes EGFR dimerization.

The protein resides in the host membrane. The protein localises to the secreted. Functionally, stimulates cellular proliferation (hyperplasia)and mobility around infected cells to promote rapid and efficient spread of infection. This effect is beneficial for virus replication in vivo, because poxviruses replicate possibly better in proliferating cells than in quiescent cells. Acts by binding host EGFR, inducing its dimerization, autophosphorylation and leading to activation of several cellular pathways regulating cell proliferation or cell survival. The activation by host EGFR of mitogen activated protein kinases (MAPK) and extracellular-signal regulated kinases (ERK) are essential for the positive effect of vaccinia growth factor on poxvirus virulence in vivo. This chain is Pro-vaccinia growth factor (OPG019), found in Homo sapiens (Human).